Consider the following 518-residue polypeptide: Zinc finger protein 776 (518 aa).

The 76-residue stretch at 14–89 (VTFEDVAVNF…HWTGVCTKKV (76 aa)) folds into the KRAB domain. Glycyl lysine isopeptide (Lys-Gly) (interchain with G-Cter in SUMO2) cross-links involve residues Lys-171, Lys-196, Lys-220, and Lys-247. The segment at 208–230 (YICGESTIPFSNKHSLVLHQRLL) adopts a C2H2-type 1; degenerate zinc-finger fold. The segment at 236–258 (YVCSDSGKFTSKSNSFNNHQGVR) adopts a C2H2-type 2; degenerate zinc-finger fold. 7 C2H2-type zinc fingers span residues 264–286 (YQCG…QRVH), 292–314 (YECG…QRVH), 320–342 (YECD…QRVH), 348–370 (YQCG…QRVH), 376–398 (FECT…QRVH), 404–426 (YECK…QRVH), and 432–454 (YECR…QQIH). A C2H2-type 10; degenerate zinc finger spans residues 460-482 (HECGECGKCFHQKGSLIRHQQIH). The segment at 488-510 (HECGECGKCFRQKGNLIKHQRVH) adopts a C2H2-type 11 zinc-finger fold.

It belongs to the krueppel C2H2-type zinc-finger protein family.

The protein localises to the nucleus. May be involved in transcriptional regulation. In Homo sapiens (Human), this protein is Zinc finger protein 776 (ZNF776).